The chain runs to 159 residues: 2-C-methyl-D-erythritol 2,4-cyclodiphosphate synthase (159 aa).

A divalent metal cation-binding residues include Asp-10 and His-12. 4-CDP-2-C-methyl-D-erythritol 2-phosphate-binding positions include 10-12 and 36-37; these read DVH and HS. His-44 contributes to the a divalent metal cation binding site. 4-CDP-2-C-methyl-D-erythritol 2-phosphate-binding positions include 58 to 60, 63 to 67, 102 to 108, 134 to 137, Phe-141, and Arg-144; these read DIG, FPDTD, AQAPKMA, and TTTE.

This sequence belongs to the IspF family. As to quaternary structure, homotrimer. A divalent metal cation is required as a cofactor.

It catalyses the reaction 4-CDP-2-C-methyl-D-erythritol 2-phosphate = 2-C-methyl-D-erythritol 2,4-cyclic diphosphate + CMP. The protein operates within isoprenoid biosynthesis; isopentenyl diphosphate biosynthesis via DXP pathway; isopentenyl diphosphate from 1-deoxy-D-xylulose 5-phosphate: step 4/6. Its function is as follows. Involved in the biosynthesis of isopentenyl diphosphate (IPP) and dimethylallyl diphosphate (DMAPP), two major building blocks of isoprenoid compounds. Catalyzes the conversion of 4-diphosphocytidyl-2-C-methyl-D-erythritol 2-phosphate (CDP-ME2P) to 2-C-methyl-D-erythritol 2,4-cyclodiphosphate (ME-CPP) with a corresponding release of cytidine 5-monophosphate (CMP). This Idiomarina loihiensis (strain ATCC BAA-735 / DSM 15497 / L2-TR) protein is 2-C-methyl-D-erythritol 2,4-cyclodiphosphate synthase.